Consider the following 106-residue polypeptide: uncharacterized protein (106 aa).

A helical membrane pass occupies residues 85–101; it reads AVALVLLCVSHHLTYLP.

The protein localises to the membrane. This is an uncharacterized protein from Saccharomyces cerevisiae (strain ATCC 204508 / S288c) (Baker's yeast).